A 338-amino-acid polypeptide reads, in one-letter code: Phenylalanine--tRNA ligase alpha subunit (338 aa).

The tract at residues 71–101 (QFEEKRSSLSQQTSSSDTYQSLPDLTLPGRQ) is disordered. Positions 78–92 (SLSQQTSSSDTYQSL) are enriched in low complexity. Glu-253 is a binding site for Mg(2+).

The protein belongs to the class-II aminoacyl-tRNA synthetase family. Phe-tRNA synthetase alpha subunit type 1 subfamily. In terms of assembly, tetramer of two alpha and two beta subunits. Mg(2+) is required as a cofactor.

The protein resides in the cytoplasm. The enzyme catalyses tRNA(Phe) + L-phenylalanine + ATP = L-phenylalanyl-tRNA(Phe) + AMP + diphosphate + H(+). This is Phenylalanine--tRNA ligase alpha subunit from Desulfotalea psychrophila (strain LSv54 / DSM 12343).